We begin with the raw amino-acid sequence, 427 residues long: Phosphatase PSR1 (427 aa).

2 S-palmitoyl cysteine lipidation sites follow: Cys-9 and Cys-10. The segment covering Thr-14 to Asn-34 has biased composition (polar residues). The interval Thr-14–Glu-223 is disordered. The segment covering Arg-35–Gly-48 has biased composition (basic residues). A compositionally biased stretch (polar residues) spans Val-49–Asn-80. The span at Lys-104 to Lys-118 shows a compositional bias: basic and acidic residues. Residue Ser-110 is modified to Phosphoserine. A compositionally biased stretch (acidic residues) spans Tyr-119 to Glu-130. Positions Asp-131 to Arg-151 are enriched in basic and acidic residues. Lys-154 participates in a covalent cross-link: Glycyl lysine isopeptide (Lys-Gly) (interchain with G-Cter in ubiquitin). Residues Gln-155 to Gln-183 are compositionally biased toward low complexity. Residues Arg-184 to Ser-214 show a composition bias toward polar residues. The 159-residue stretch at Ser-253–Leu-411 folds into the FCP1 homology domain.

As to quaternary structure, interacts with WHI2.

Its subcellular location is the cell membrane. Functionally, has phosphatase activity in vitro. Involved in the response to sodium and lithium ion stress (but not to potassium or sorbitol stress) by inducing transcription of the sodium pump ENA1/PMR2. Acts through a calcineurin-independent pathway and is functionally redundant with PSR2. Also involved in the general stress response; acts together with WHI2 to activate stress response element (STRE)-mediated gene expression, possibly through dephosphorylation of MSN2. This is Phosphatase PSR1 (PSR1) from Saccharomyces cerevisiae (strain ATCC 204508 / S288c) (Baker's yeast).